We begin with the raw amino-acid sequence, 190 residues long: Segregation and condensation protein B (190 aa).

Belongs to the ScpB family. In terms of assembly, homodimer. Homodimerization may be required to stabilize the binding of ScpA to the Smc head domains. Component of a cohesin-like complex composed of ScpA, ScpB and the Smc homodimer, in which ScpA and ScpB bind to the head domain of Smc. The presence of the three proteins is required for the association of the complex with DNA.

The protein resides in the cytoplasm. Functionally, participates in chromosomal partition during cell division. May act via the formation of a condensin-like complex containing Smc and ScpA that pull DNA away from mid-cell into both cell halves. This chain is Segregation and condensation protein B, found in Bacillus cereus (strain ATCC 14579 / DSM 31 / CCUG 7414 / JCM 2152 / NBRC 15305 / NCIMB 9373 / NCTC 2599 / NRRL B-3711).